A 546-amino-acid chain; its full sequence is ATP synthase subunit alpha (546 aa).

173-180 (GDRQTGKT) provides a ligand contact to ATP. Positions 520–546 (VDKKTAPKSVTPVDQEQIKAGKAQEKK) are disordered. The segment covering 535–546 (EQIKAGKAQEKK) has biased composition (basic and acidic residues).

It belongs to the ATPase alpha/beta chains family. In terms of assembly, F-type ATPases have 2 components, CF(1) - the catalytic core - and CF(0) - the membrane proton channel. CF(1) has five subunits: alpha(3), beta(3), gamma(1), delta(1), epsilon(1). CF(0) has three main subunits: a(1), b(2) and c(9-12). The alpha and beta chains form an alternating ring which encloses part of the gamma chain. CF(1) is attached to CF(0) by a central stalk formed by the gamma and epsilon chains, while a peripheral stalk is formed by the delta and b chains.

It localises to the cell membrane. It catalyses the reaction ATP + H2O + 4 H(+)(in) = ADP + phosphate + 5 H(+)(out). Functionally, produces ATP from ADP in the presence of a proton gradient across the membrane. The alpha chain is a regulatory subunit. This Bifidobacterium animalis subsp. lactis (strain AD011) protein is ATP synthase subunit alpha.